Reading from the N-terminus, the 604-residue chain is Sulfite reductase [NADPH] flavoprotein alpha-component (604 aa).

A Flavodoxin-like domain is found at 66-204; that stretch reads VTVLSASQTG…AANAWTDNIA (139 aa). FMN-binding positions include 72-77, 119-122, and 155-164; these read SQTGNA, STQG, and LGDSSYPNFC. Residues 239-453 enclose the FAD-binding FR-type domain; that stretch reads ADPFPAALLA…VERNDGFRLP (215 aa). FAD-binding positions include Thr327, Gln361, 391–394, 409–411, and 424–427; these read RLYS, TVG, and GGAS. NADP(+)-binding positions include 524–525, 530–534, and Asp566; these read SR and KIYVQ. Position 604 (Tyr604) interacts with FAD.

Belongs to the NADPH-dependent sulphite reductase flavoprotein subunit CysJ family. The protein in the N-terminal section; belongs to the flavodoxin family. It in the C-terminal section; belongs to the flavoprotein pyridine nucleotide cytochrome reductase family. In terms of assembly, alpha(8)-beta(8). The alpha component is a flavoprotein, the beta component is a hemoprotein. It depends on FAD as a cofactor. FMN is required as a cofactor.

The catalysed reaction is hydrogen sulfide + 3 NADP(+) + 3 H2O = sulfite + 3 NADPH + 4 H(+). The protein operates within sulfur metabolism; hydrogen sulfide biosynthesis; hydrogen sulfide from sulfite (NADPH route): step 1/1. Component of the sulfite reductase complex that catalyzes the 6-electron reduction of sulfite to sulfide. This is one of several activities required for the biosynthesis of L-cysteine from sulfate. The flavoprotein component catalyzes the electron flow from NADPH -&gt; FAD -&gt; FMN to the hemoprotein component. In Neisseria meningitidis serogroup C (strain 053442), this protein is Sulfite reductase [NADPH] flavoprotein alpha-component.